Reading from the N-terminus, the 486-residue chain is ATP synthase subunit beta (486 aa).

170-177 contributes to the ATP binding site; the sequence is GGAGVGKT.

Belongs to the ATPase alpha/beta chains family. F-type ATPases have 2 components, CF(1) - the catalytic core - and CF(0) - the membrane proton channel. CF(1) has five subunits: alpha(3), beta(3), gamma(1), delta(1), epsilon(1). CF(0) has three main subunits: a(1), b(2) and c(9-12). The alpha and beta chains form an alternating ring which encloses part of the gamma chain. CF(1) is attached to CF(0) by a central stalk formed by the gamma and epsilon chains, while a peripheral stalk is formed by the delta and b chains.

The protein localises to the cell membrane. It catalyses the reaction ATP + H2O + 4 H(+)(in) = ADP + phosphate + 5 H(+)(out). Produces ATP from ADP in the presence of a proton gradient across the membrane. The catalytic sites are hosted primarily by the beta subunits. The sequence is that of ATP synthase subunit beta from Clavibacter sepedonicus (Clavibacter michiganensis subsp. sepedonicus).